We begin with the raw amino-acid sequence, 367 residues long: uncharacterized protein (367 aa).

Helical transmembrane passes span 35–55, 61–81, 92–112, and 113–133; these read YVYD…IILW, LALF…TLLV, EVAD…TAAG, and LMFS…PLFL. 3 disordered regions span residues 177-220, 249-283, and 296-367; these read KLPK…PASI, SNIK…YYTP, and GDIS…SRPK. The span at 257–274 shows a compositional bias: polar residues; it reads NTKSILHTPLNRRSPSGS. Residues 302 to 312 show a composition bias toward low complexity; that stretch reads SSSSTSSKTST. The span at 323–342 shows a compositional bias: basic and acidic residues; sequence SRSERNARHHRNKEDHRQNQ. Residues 357–367 are compositionally biased toward basic residues; it reads PRRKKYRSRPK.

Belongs to the chlamydial CPn_0443/CT_005/TC_0273 family.

The protein localises to the cell membrane. This is an uncharacterized protein from Chlamydia muridarum (strain MoPn / Nigg).